Reading from the N-terminus, the 117-residue chain is UPF0375 protein Y45F10C.2 (117 aa).

Positions methionine 1 to glycine 20 are cleaved as a signal peptide.

Belongs to the UPF0375 family. As to expression, expressed in the uterine epithelium.

The protein resides in the secreted. Its function is as follows. Negatively regulates the egg-laying rate by promoting retention of fertilized eggs. The chain is UPF0375 protein Y45F10C.2 from Caenorhabditis elegans.